Consider the following 341-residue polypeptide: L-threonine 3-dehydrogenase (341 aa).

Cys-38 serves as a coordination point for Zn(2+). Active-site charge relay system residues include Thr-40 and His-43. The Zn(2+) site is built by His-63, Glu-64, Cys-93, Cys-96, Cys-99, and Cys-107. NAD(+) is bound by residues Ile-175, Asp-195, Arg-200, Leu-262–Ile-264, and Ile-286–Tyr-287.

Belongs to the zinc-containing alcohol dehydrogenase family. In terms of assembly, homotetramer. It depends on Zn(2+) as a cofactor.

The protein resides in the cytoplasm. It carries out the reaction L-threonine + NAD(+) = (2S)-2-amino-3-oxobutanoate + NADH + H(+). The protein operates within amino-acid degradation; L-threonine degradation via oxydo-reductase pathway; glycine from L-threonine: step 1/2. Catalyzes the NAD(+)-dependent oxidation of L-threonine to 2-amino-3-ketobutyrate. In Escherichia coli O139:H28 (strain E24377A / ETEC), this protein is L-threonine 3-dehydrogenase.